We begin with the raw amino-acid sequence, 184 residues long: NADH-quinone oxidoreductase subunit B (184 aa).

[4Fe-4S] cluster contacts are provided by Cys37, Cys38, Cys103, and Cys132. Residues 164-184 (HEREEAAKHALPTHSMKGLLR) are disordered.

The protein belongs to the complex I 20 kDa subunit family. In terms of assembly, NDH-1 is composed of 14 different subunits. Subunits NuoB, C, D, E, F, and G constitute the peripheral sector of the complex. Requires [4Fe-4S] cluster as cofactor.

The protein resides in the cell membrane. The enzyme catalyses a quinone + NADH + 5 H(+)(in) = a quinol + NAD(+) + 4 H(+)(out). Its function is as follows. NDH-1 shuttles electrons from NADH, via FMN and iron-sulfur (Fe-S) centers, to quinones in the respiratory chain. The immediate electron acceptor for the enzyme in this species is believed to be a menaquinone. Couples the redox reaction to proton translocation (for every two electrons transferred, four hydrogen ions are translocated across the cytoplasmic membrane), and thus conserves the redox energy in a proton gradient. The polypeptide is NADH-quinone oxidoreductase subunit B (Acidothermus cellulolyticus (strain ATCC 43068 / DSM 8971 / 11B)).